A 508-amino-acid chain; its full sequence is DDB1- and CUL4-associated factor 10 (508 aa).

The interval 1-75 is disordered; it reads MSSGHPSDNE…GSASGSGCRG (75 aa). A compositionally biased stretch (basic and acidic residues) spans 7 to 17; the sequence is SDNEEPRADLL. The segment covering 18–32 has biased composition (acidic residues); it reads REEEEEEEEEEDSDE. Positions 63–75 are enriched in gly residues; that stretch reads GGTGSASGSGCRG. WD repeat units lie at residues 126–165, 169–207, 211–250, and 256–295; these read QTHG…HIKT, AHED…SKVC, GHAS…EDGC, and FHTR…QSLE. A disordered region spans residues 307 to 343; the sequence is PPLSTEGSSAGSRSGGPRHTIDNKNHPHREGLSPRNS. Residues 325 to 338 are compositionally biased toward basic and acidic residues; it reads HTIDNKNHPHREGL. WD repeat units follow at residues 356 to 396, 419 to 457, and 475 to 508; these read DRGN…QEGA, VGRG…AELV, and SHSD…QPHF.

Belongs to the WD repeat DCAF10 family.

It participates in protein modification; protein ubiquitination. In terms of biological role, may function as a substrate receptor for CUL4-DDB1 E3 ubiquitin-protein ligase complex. This is DDB1- and CUL4-associated factor 10 (dcaf10) from Danio rerio (Zebrafish).